A 201-amino-acid chain; its full sequence is Protein lin-7 homolog B (201 aa).

The short motif at 1–13 (MAALVEPLGLERE) is the Kinase interacting site element. Residues 10 to 65 (LEREVSRAVELLERLQRSGELPPQKLQALQRVLQSRFCSAIREVYEQLYDTLDITG) enclose the L27 domain. The region spanning 93–175 (VVELPKTDEG…SVKLVVRYTP (83 aa)) is the PDZ domain.

It belongs to the lin-7 family. In terms of assembly, forms a complex with CASK and CASKIN1. Component of the brain-specific heterotrimeric complex (LIN-10-LIN-2-LIN-7 complex) composed of at least APBA1, CASK, and LIN7, which associates with the motor protein KIF17 to transport vesicles along microtubules. Forms a heterotrimeric complex composed of MMP5, LIN7B and PATJ; the N-terminal L27 domain of PALS1 interacts with the L27 domain of PATJ and the C-terminal L27 domain of PALS1 interacts with the L27 domain of LIN7B. Forms a heterotrimeric complex with DLG1 and CASK via their L27 domains. Interacts with DLG4 and GRIN2B as well as CDH1 and CTNNB1, the channels KCNJ12/Kir2.2, KCNJ4/Kir2.3 and probably KCNJ2/Kir2.1 and SLC6A12/BGT-1 via its PDZ domain. The association of LIN7A with cadherin and beta-catenin is calcium-dependent, occurs at synaptic junctions and requires the actin cytoskeleton. Interacts with EGFR, ERBB2, ERBB3 and ERBB4 with both PDZ and KID domains. Interacts with ASIC3. Interacts with TOPK. Interacts with RTKN. Associates with KIF17 via APBA1. Interacts with APBA1. Interacts with MPP7. Interacts with DLG2. Interacts with DLG3.

The protein localises to the cell membrane. The protein resides in the basolateral cell membrane. It is found in the cell junction. Its subcellular location is the postsynaptic density membrane. It localises to the tight junction. Functionally, plays a role in establishing and maintaining the asymmetric distribution of channels and receptors at the plasma membrane of polarized cells. Forms membrane-associated multiprotein complexes that may regulate delivery and recycling of proteins to the correct membrane domains. The tripartite complex composed of LIN7 (LIN7A, LIN7B or LIN7C), CASK and APBA1 associates with the motor protein KIF17 to transport vesicles containing N-methyl-D-aspartate (NMDA) receptor subunit NR2B along microtubules. This complex may have the potential to couple synaptic vesicle exocytosis to cell adhesion in brain. Ensures the proper localization of GRIN2B (subunit 2B of the NMDA receptor) to neuronal postsynaptic density and may function in localizing synaptic vesicles at synapses where it is recruited by beta-catenin and cadherin. Required to localize Kir2 channels, GABA transporter (SLC6A12) and EGFR/ERBB1, ERBB2, ERBB3 and ERBB4 to the basolateral membrane of epithelial cells. May increase the amplitude of ASIC3 acid-evoked currents by stabilizing the channel at the cell surface. This is Protein lin-7 homolog B (LIN7B) from Bos taurus (Bovine).